Reading from the N-terminus, the 468-residue chain is Tyrosine phenol-lyase (468 aa).

An N6-(pyridoxal phosphate)lysine modification is found at lysine 260.

This sequence belongs to the beta-eliminating lyase family. Homotetramer. Requires pyridoxal 5'-phosphate as cofactor.

It catalyses the reaction L-tyrosine + H2O = phenol + pyruvate + NH4(+). The protein is Tyrosine phenol-lyase of Lacrimispora saccharolytica (strain ATCC 35040 / DSM 2544 / NRCC 2533 / WM1) (Clostridium saccharolyticum).